A 287-amino-acid chain; its full sequence is RxLR effector protein Avr4 (287 aa).

The first 24 residues, 1 to 24 (MRSLHILLVFTASLLASLTESAKA), serve as a signal peptide directing secretion. Residues 42 to 55 (RFLRAQTDEKNEER) carry the RxLR-dEER motif. The interval 115–138 (KYERMQWQKLKEGETLTFMRLGDR) is W1 motif. The W2 motif stretch occupies residues 148–171 (QLLRWVAQKKPVESVYDDLQVAGF). The W3 motif stretch occupies residues 221 to 244 (LFEKWAMEGTHIKSVITTLKLNGK). The tract at residues 246–267 (ASEMANNENFPALLKYVKLYLD) is y motif.

This sequence belongs to the RxLR effector family.

It localises to the secreted. It is found in the host cytoplasm. The protein localises to the host nucleus. The protein resides in the host nucleolus. Its subcellular location is the host cytoskeleton. Secreted effector that acts as an elicitor of hypersensitive response (HR) specifically on plants carrying defense protein R4, through its interaction with this protein. This is RxLR effector protein Avr4 from Phytophthora infestans (strain T30-4) (Potato late blight agent).